Reading from the N-terminus, the 196-residue chain is Nitrogen regulatory protein P-II homolog (196 aa).

A chloroplast-targeting transit peptide spans 1–61 (MAASMTKPIS…NNSRVLPVVS (61 aa)). ATP is bound by residues 108 to 112 (GFGAQ) and 161 to 164 (GDGK). Gly110 contacts Mg(2+).

It belongs to the P(II) protein family. In terms of assembly, homodimer. Interacts with NAGK. Interaction with NAGK is dependent of MgATP and inhibited by 2-oxoglutarate, arginine, glutamate, citrate, and oxaloacetate.

The protein resides in the plastid. Its subcellular location is the chloroplast. Its function is as follows. Participates in sensing carbon and organic nitrogen status and regulates some steps of primary carbon and nitrogen metabolism. Required for nitrite uptake in chloroplasts and regulates arginine biosynthesis through interaction with acetylglutamate kinase (NAGK) in chloroplasts. Regulates fatty acids synthesis in chloroplasts by interacting with the acetyl-CoA carboxylase complex and inhibiting acetyl-CoA carboxylase (ACCase) activity. The polypeptide is Nitrogen regulatory protein P-II homolog (GLB1) (Arabidopsis thaliana (Mouse-ear cress)).